The sequence spans 704 residues: Zinc finger CCHC domain-containing protein 8 (704 aa).

A2 is subject to N-acetylalanine. A compositionally biased stretch (basic and acidic residues) spans 16–33 (FDHPEESIPEPVHTRFKD). The segment at 16–43 (FDHPEESIPEPVHTRFKDDDEEDENGVG) is disordered. A coiled-coil region spans residues 43 to 78 (GDAELRERLRQCEETIEQLRAENQELKRKLNILTRP). The CCHC-type zinc finger occupies 225 to 242 (PHCFNCGSEEHQMKDCPM). RBM7 binding regions lie at residues 284–297 (FKPG…QDAL) and 307–322 (FIYR…GWLK). Phosphothreonine is present on T340. 2 disordered regions span residues 407–516 (APGV…LTLE) and 529–599 (LEQA…SPDC). K411 participates in a covalent cross-link: Glycyl lysine isopeptide (Lys-Gly) (interchain with G-Cter in SUMO2). Positions 454-463 (SQSSESFQFQ) are enriched in low complexity. The span at 464–494 (PPLPPDTPPLPRGTPPPIFTPPLPKGTPPLT) shows a compositional bias: pro residues. Phosphothreonine occurs at positions 470, 477, 483, and 490. Residues 514 to 538 (TLEELEEQQRRIWAALEQAESLNSD) are a coiled coil. A compositionally biased stretch (polar residues) spans 547 to 557 (LTGNSVASSPC). Residue T575 is modified to Phosphothreonine. S596 is modified (phosphoserine). T645 bears the Phosphothreonine mark. A phosphoserine mark is found at S646, S655, and S692. The tract at residues 656 to 704 (PIPDMSKFATGITPFEFENMAESTGMYLRIRSLLKNSPRNQQKNKKASE) is MTREX binding.

It belongs to the ZCCHC8 family. In terms of assembly, component of a nuclear TRAMP-like complex, an ATP-dependent exosome regulatory complex consisting of a helicase (MTREX), an oligadenylate polymerase (TENT4B or TENT4A), and a substrate specific RNA-binding factor (ZCCHC7 or ZCCHC8). Several TRAMP-like complexes exist with specific compositions and are associated with nuclear, or nucleolar RNA exosomes. Identified in the spliceosome C complex. Component of the nuclear exosome targeting (NEXT) complex composed of MTREX, ZCCHC8, and RBM7 that directs a subset of non-coding short-lived RNAs for exosomal degradation. Interacts with proteins involved in RNA processing and degradation such as MTREX and RBM7; interaction with MTREX enhances MTREX RNA helicase activity and bridges between RBM7 and MTREX. Interacts with TERC, the telomerase RNA component. In terms of processing, phosphorylation at Thr-490 by GSK3 is triggered in cells entering mitosis.

It localises to the nucleus. Its subcellular location is the nucleoplasm. Its function is as follows. Scaffolding subunit of the trimeric nuclear exosome targeting (NEXT) complex that is involved in the surveillance and turnover of aberrant transcripts and non-coding RNAs. NEXT functions as an RNA exosome cofactor that directs a subset of non-coding short-lived RNAs for exosomal degradation. May be involved in pre-mRNA splicing. It is required for 3'-end maturation of telomerase RNA component (TERC), TERC 3'-end targeting to the nuclear RNA exosome, and for telomerase function. This chain is Zinc finger CCHC domain-containing protein 8 (ZCCHC8), found in Pongo abelii (Sumatran orangutan).